The following is a 223-amino-acid chain: MKIFLDTANISEIKEGIDLGLVDGVTTNPTLISKEAGGSKKYAEIIKEILKIVDGPVSVEVVSTKSDGMVEEARKIHALGDNAVVKIPMTDEGLKAIRKLSQENIETNCTLVFNPIQALLAAKSGATYVSPFVGRLDDIGQDGMQIIDEIKTIFNNYIIKTQILVASVRNPIHVLRAAIIGADVVTIPFSVLKLLIKHPKTDEGLTRFLEDWKKVSPDGKFII.

Lysine 86 functions as the Schiff-base intermediate with substrate in the catalytic mechanism.

Belongs to the transaldolase family. Type 3B subfamily.

It localises to the cytoplasm. The catalysed reaction is D-sedoheptulose 7-phosphate + D-glyceraldehyde 3-phosphate = D-erythrose 4-phosphate + beta-D-fructose 6-phosphate. Its pathway is carbohydrate degradation; pentose phosphate pathway; D-glyceraldehyde 3-phosphate and beta-D-fructose 6-phosphate from D-ribose 5-phosphate and D-xylulose 5-phosphate (non-oxidative stage): step 2/3. Its function is as follows. Transaldolase is important for the balance of metabolites in the pentose-phosphate pathway. The polypeptide is Probable transaldolase (tal) (Thermoplasma volcanium (strain ATCC 51530 / DSM 4299 / JCM 9571 / NBRC 15438 / GSS1)).